We begin with the raw amino-acid sequence, 376 residues long: Pyrimidine monooxygenase RutA (376 aa).

FMN-binding positions include 61–62 (IK), Asn127, Glu136, 152–153 (RY), and Ser202.

The protein belongs to the NtaA/SnaA/DszA monooxygenase family. RutA subfamily.

The catalysed reaction is uracil + FMNH2 + NADH + O2 = (Z)-3-ureidoacrylate + FMN + NAD(+) + H2O + H(+). It catalyses the reaction thymine + FMNH2 + NADH + O2 = (Z)-2-methylureidoacrylate + FMN + NAD(+) + H2O + H(+). Functionally, catalyzes the pyrimidine ring opening between N-3 and C-4 by an unusual flavin hydroperoxide-catalyzed mechanism, adding oxygen atoms in the process to yield ureidoacrylate peracid, that immediately reacts with FMN forming ureidoacrylate and FMN-N(5)-oxide. The FMN-N(5)-oxide reacts spontaneously with NADH to produce FMN. Requires the flavin reductase RutF to regenerate FMN in vivo. The polypeptide is Pyrimidine monooxygenase RutA (Methylorubrum extorquens (strain CM4 / NCIMB 13688) (Methylobacterium extorquens)).